The sequence spans 184 residues: UPF0398 protein BC_1561 (184 aa).

This sequence belongs to the UPF0398 family.

This Bacillus cereus (strain ATCC 14579 / DSM 31 / CCUG 7414 / JCM 2152 / NBRC 15305 / NCIMB 9373 / NCTC 2599 / NRRL B-3711) protein is UPF0398 protein BC_1561.